Reading from the N-terminus, the 391-residue chain is NADH-quinone oxidoreductase subunit D (391 aa).

This sequence belongs to the complex I 49 kDa subunit family. In terms of assembly, NDH-1 is composed of 14 different subunits. Subunits NuoB, C, D, E, F, and G constitute the peripheral sector of the complex.

The protein localises to the cell inner membrane. The catalysed reaction is a quinone + NADH + 5 H(+)(in) = a quinol + NAD(+) + 4 H(+)(out). In terms of biological role, NDH-1 shuttles electrons from NADH, via FMN and iron-sulfur (Fe-S) centers, to quinones in the respiratory chain. The immediate electron acceptor for the enzyme in this species is believed to be ubiquinone. Couples the redox reaction to proton translocation (for every two electrons transferred, four hydrogen ions are translocated across the cytoplasmic membrane), and thus conserves the redox energy in a proton gradient. The protein is NADH-quinone oxidoreductase subunit D of Rickettsia rickettsii (strain Sheila Smith).